The chain runs to 357 residues: Cinnamyl alcohol dehydrogenase 5 (357 aa).

Cys47 is a binding site for Zn(2+). Residue Thr49 participates in NADP(+) binding. Residues His69, Glu70, Cys100, Cys103, Cys106, Cys114, and Cys163 each coordinate Zn(2+). Residues Thr167, Gly188 to Gly193, Ser211 to Lys216, Thr251, Gly275, and Ser298 to Ile300 each bind NADP(+).

The protein belongs to the zinc-containing alcohol dehydrogenase family. In terms of assembly, homodimer. The cofactor is Zn(2+). As to expression, expressed at the lateral root initiation sites, in the vascular tissues of the primary lateral root and the root caps. Expressed in the hypocotyl, cotyledon and leaf veins, apical meristem region, at the base of the trichomes, hydathodes and cauline leaves. In stems, expressed in the cells associated with the vascular cambium, interfascicular cambium and the developing xylem. Expressed in the vascular strand of petals and sepals, anthers, stamen filaments, stigma in flowers, and abscission, style and stigmatic regions of siliques.

The enzyme catalyses (E)-cinnamyl alcohol + NADP(+) = (E)-cinnamaldehyde + NADPH + H(+). It carries out the reaction (E)-coniferol + NADP(+) = (E)-coniferaldehyde + NADPH + H(+). The catalysed reaction is (E)-sinapyl alcohol + NADP(+) = (E)-sinapaldehyde + NADPH + H(+). It catalyses the reaction (E)-4-coumaroyl alcohol + NADP(+) = (E)-4-coumaraldehyde + NADPH + H(+). The enzyme catalyses (E)-caffeyl alcohol + NADP(+) = (E)-caffeyl aldehyde + NADPH + H(+). The protein operates within aromatic compound metabolism; phenylpropanoid biosynthesis. Involved in lignin biosynthesis in the floral stem. Catalyzes the final step specific for the production of lignin monomers. Catalyzes the NADPH-dependent reduction of coniferaldehyde, 5-hydroxyconiferaldehyde, sinapaldehyde, 4-coumaraldehyde and caffeyl aldehyde to their respective alcohols. The polypeptide is Cinnamyl alcohol dehydrogenase 5 (Arabidopsis thaliana (Mouse-ear cress)).